The primary structure comprises 234 residues: Orotidine 5'-phosphate decarboxylase (234 aa).

Substrate-binding positions include Asp-17, Lys-38, 65 to 74 (DLKLHDIPNT), Thr-122, Arg-184, Gln-193, Gly-213, and Arg-214. Residue Lys-67 is the Proton donor of the active site.

Belongs to the OMP decarboxylase family. Type 1 subfamily. In terms of assembly, homodimer.

It carries out the reaction orotidine 5'-phosphate + H(+) = UMP + CO2. It functions in the pathway pyrimidine metabolism; UMP biosynthesis via de novo pathway; UMP from orotate: step 2/2. Functionally, catalyzes the decarboxylation of orotidine 5'-monophosphate (OMP) to uridine 5'-monophosphate (UMP). The protein is Orotidine 5'-phosphate decarboxylase of Thermosynechococcus vestitus (strain NIES-2133 / IAM M-273 / BP-1).